The sequence spans 137 residues: Large ribosomal subunit protein uL16 (137 aa).

Residues 1–19 show a composition bias toward basic residues; it reads MLSPKKVKFRKQQRGRRTG. Residues 1-20 form a disordered region; the sequence is MLSPKKVKFRKQQRGRRTGT.

The protein belongs to the universal ribosomal protein uL16 family. In terms of assembly, part of the 50S ribosomal subunit.

Binds 23S rRNA and is also seen to make contacts with the A and possibly P site tRNAs. The chain is Large ribosomal subunit protein uL16 from Desulfosudis oleivorans (strain DSM 6200 / JCM 39069 / Hxd3) (Desulfococcus oleovorans).